Reading from the N-terminus, the 155-residue chain is Troponin C, isoform 2 (155 aa).

4 EF-hand domains span residues 11 to 46, 47 to 82, 87 to 122, and 123 to 155; these read EQIA…MGQP, FDRQ…FIVE, AMQK…LDDQ, and LTEQ…MTGE. The Ca(2+) site is built by Asp60, Asp62, Ser64, Arg66, and Glu71. 5 residues coordinate Ca(2+): Asp136, Asp138, Ser140, Thr142, and Glu147.

Belongs to the troponin C family. As to expression, accumulates almost exclusively in larval muscles.

This is Troponin C, isoform 2 (TpnC47D) from Drosophila melanogaster (Fruit fly).